We begin with the raw amino-acid sequence, 84 residues long: Putative defensin-like protein 165 (84 aa).

A signal peptide spans 1–27; that stretch reads MSTKLFSYFMLLVVLFSVLTIIPKTEA. Cystine bridges form between C31–C78, C41–C60, C46–C72, and C50–C74.

This sequence belongs to the DEFL family.

It localises to the secreted. In Arabidopsis thaliana (Mouse-ear cress), this protein is Putative defensin-like protein 165 (LCR12).